A 622-amino-acid chain; its full sequence is Pyranose 2-oxidase (622 aa).

Residues 1–28 (MSASSSDPFHSFAKTSFTSKAAKRATAH) form the signal peptide. Residues 29-37 (SLPPLPGPG) constitute a propeptide that is removed on maturation. Position 167 is a tele-8alpha-FAD histidine (histidine 167). 2 residues coordinate substrate: glutamine 449 and histidine 451. The Proton acceptor role is filled by histidine 546. Residue asparagine 591 is part of the active site.

The protein belongs to the GMC oxidoreductase family. As to quaternary structure, homotetramer. FAD is required as a cofactor. Post-translationally, not glycosylated.

Its subcellular location is the periplasm. The catalysed reaction is D-glucose + O2 = 2-dehydro-D-glucose + H2O2. In terms of biological role, catalyzes the oxidation of various aldopyranoses and disaccharides on carbon-2 to the corresponding 2-keto sugars concomitant with the reduction of O(2) to H(2)O(2). Plays an important role in lignin degradation of wood rot fungi by supplying the essential cosubstrate H(2)O(2) for the ligninolytic peroxidases, lignin peroxidase and manganese-dependent peroxidase. The preferred substrate is D-glucose which is converted to 2-dehydro-D-glucose, an intermediate of a secondary metabolic pathway leading to the antibiotic cortalcerone. Also acts on D-xylose, together with D-glucose the major sugars derived from wood, on L-sorbose, D-galactose and 1,5-anhydroglucitol, a diagnostic marker of diabetes mellitus. The polypeptide is Pyranose 2-oxidase (p2ox) (Phlebiopsis gigantea (White-rot fungus)).